The sequence spans 283 residues: Adenylate dimethylallyltransferase (283 aa).

The protein belongs to the isopentenyl transferase family.

The catalysed reaction is dimethylallyl diphosphate + AMP = N(6)-(dimethylallyl)adenosine 5'-phosphate + diphosphate. In terms of biological role, transfers dimethylallyl groups to AMP as part of the biosynthesis of cytokinin phytohormones like isopentenyl adenine or discadenine which controle spore formation and viability. This chain is Adenylate dimethylallyltransferase (iptA), found in Dictyostelium discoideum (Social amoeba).